The sequence spans 410 residues: Arginine deiminase (410 aa).

The active-site Amidino-cysteine intermediate is Cys-400.

It belongs to the arginine deiminase family.

The protein localises to the cytoplasm. The catalysed reaction is L-arginine + H2O = L-citrulline + NH4(+). It functions in the pathway amino-acid degradation; L-arginine degradation via ADI pathway; carbamoyl phosphate from L-arginine: step 1/2. In Bacillus cereus (strain G9842), this protein is Arginine deiminase.